The primary structure comprises 1133 residues: Roquin-1 (1133 aa).

Residues Cys-14, Cys-17, Cys-33, His-35, Cys-38, Cys-50, and Asp-53 each coordinate Zn(2+). Residues 14 to 54 (CPICTQTFDETIRKPISLGCGHTVCKMCLNKLHRKACPFDQ) form an RING-type; degenerate zinc finger. The tract at residues 89–173 (GVEDTKHYEE…RTVTELILQH (85 aa)) is HEPN-N. An ROQ region spans residues 174–326 (QNPQQLSSNL…MQSIIDKLQT (153 aa)). Residues 327–396 (PASFAQSVQE…VVHGLVDYIQ (70 aa)) form an HEPN-C region. The C3H1-type zinc finger occupies 413–441 (KYKTYMCRDMKQRGGCPRGASCTFAHSQE). Ser-462, Ser-531, Ser-535, and Ser-863 each carry phosphoserine. The interval 505-542 (TQLIPRGTDPSYDSSLKPGKIDHLSSSAPGSPPDLLES) is disordered. Disordered stretches follow at residues 1000–1019 (NTLAGQSQPPPPPPPKWPGM), 1058–1078 (NTSKQAENGQPEPQNKVPAED), and 1094–1133 (QENISLLSNKTSSLNLSEDPEGGGDNNDSQRSGVTPSSAP). Positions 1007–1016 (QPPPPPPPKW) are enriched in pro residues. A compositionally biased stretch (polar residues) spans 1058–1070 (NTSKQAENGQPEP). The segment covering 1096–1110 (NISLLSNKTSSLNLS) has biased composition (low complexity). Phosphoserine is present on Ser-1110. Positions 1119 to 1133 (NNDSQRSGVTPSSAP) are enriched in polar residues.

As to quaternary structure, able to homodimerize. Interacts with DDX6 and EDC4. Interacts with CCR4-NOT deadenylase complex. Interacts with RC3H1; the interaction is RNA independent. Proteolytically cleaved after Arg-510 and Arg-579 by MALT1 in activated CD4(+) T cells; cleavage at Arg-510 and Arg-579 is critical for promoting RC3H1 degradation in response to T-cell receptor (TCR) stimulation, and hence is necessary for prolonging the stability of a set of mRNAs controlling Th17 cell differentiation. As to expression, widely expressed. Expressed at higher level in cerebellum, spleen, ovary and liver.

It is found in the cytoplasm. Its subcellular location is the P-body. The protein localises to the cytoplasmic granule. It carries out the reaction S-ubiquitinyl-[E2 ubiquitin-conjugating enzyme]-L-cysteine + [acceptor protein]-L-lysine = [E2 ubiquitin-conjugating enzyme]-L-cysteine + N(6)-ubiquitinyl-[acceptor protein]-L-lysine.. It participates in protein modification; protein ubiquitination. Its function is as follows. Post-transcriptional repressor of mRNAs containing a conserved stem loop motif, called constitutive decay element (CDE), which is often located in the 3'-UTR, as in HMGXB3, ICOS, IER3, NFKBID, NFKBIZ, PPP1R10, TNF, TNFRSF4 and in many more mRNAs. Cleaves translationally inactive mRNAs harboring a stem-loop (SL), often located in their 3'-UTRs, during the early phase of inflammation in a helicase UPF1-independent manner. Binds to CDE and promotes mRNA deadenylation and degradation. This process does not involve miRNAs. In follicular helper T (Tfh) cells, represses of ICOS and TNFRSF4 expression, thus preventing spontaneous Tfh cell differentiation, germinal center B-cell differentiation in the absence of immunization and autoimmunity. In resting or LPS-stimulated macrophages, controls inflammation by suppressing TNF expression. Also recognizes CDE in its own mRNA and in that of paralogous RC3H2, possibly leading to feedback loop regulation. Recognizes and binds mRNAs containing a hexaloop stem-loop motif, called alternative decay element (ADE). Together with ZC3H12A, destabilizes TNFRSF4/OX40 mRNA by binding to the conserved stem loop structure in its 3'UTR. Able to interact with double-stranded RNA (dsRNA). miRNA-binding protein that regulates microRNA homeostasis. Enhances DICER-mediated processing of pre-MIR146a but reduces mature MIR146a levels through an increase of 3' end uridylation. Both inhibits ICOS mRNA expression and they may act together to exert the suppression. Acts as a ubiquitin E3 ligase. Pairs with E2 enzymes UBE2A, UBE2B, UBE2D2, UBE2F, UBE2G1, UBE2G2 and UBE2L3 and produces polyubiquitin chains. Shows the strongest activity when paired with UBE2N:UBE2V1 or UBE2N:UBE2V2 E2 complexes and generate both short and long polyubiquitin chains. In Homo sapiens (Human), this protein is Roquin-1.